The following is a 359-amino-acid chain: Glycerol-1-phosphate dehydrogenase [NAD(P)+] (359 aa).

NAD(+)-binding positions include 107–111 (GRVID) and 129–132 (TAAS). Residue D134 coordinates substrate. S138 provides a ligand contact to NAD(+). A substrate-binding site is contributed by D181. Positions 181 and 261 each coordinate Zn(2+). Position 265 (H265) interacts with substrate. H277 is a binding site for Zn(2+).

This sequence belongs to the glycerol-1-phosphate dehydrogenase family. The cofactor is Zn(2+).

It is found in the cytoplasm. The enzyme catalyses sn-glycerol 1-phosphate + NAD(+) = dihydroxyacetone phosphate + NADH + H(+). It catalyses the reaction sn-glycerol 1-phosphate + NADP(+) = dihydroxyacetone phosphate + NADPH + H(+). The protein operates within membrane lipid metabolism; glycerophospholipid metabolism. Functionally, catalyzes the NAD(P)H-dependent reduction of dihydroxyacetonephosphate (DHAP or glycerone phosphate) to glycerol 1-phosphate (G1P). The G1P thus generated is used as the glycerophosphate backbone of phospholipids in the cellular membranes of Archaea. In Methanospirillum hungatei JF-1 (strain ATCC 27890 / DSM 864 / NBRC 100397 / JF-1), this protein is Glycerol-1-phosphate dehydrogenase [NAD(P)+].